The chain runs to 63 residues: Large ribosomal subunit protein bL28 (63 aa).

The protein belongs to the bacterial ribosomal protein bL28 family.

This Mycoplasmopsis synoviae (strain 53) (Mycoplasma synoviae) protein is Large ribosomal subunit protein bL28.